The following is a 1116-amino-acid chain: Error-prone DNA polymerase 1 (1116 aa).

The protein belongs to the DNA polymerase type-C family. DnaE2 subfamily.

It is found in the cytoplasm. The catalysed reaction is DNA(n) + a 2'-deoxyribonucleoside 5'-triphosphate = DNA(n+1) + diphosphate. In terms of biological role, DNA polymerase involved in damage-induced mutagenesis and translesion synthesis (TLS). It is not the major replicative DNA polymerase. The polypeptide is Error-prone DNA polymerase 1 (Rhizobium meliloti (strain 1021) (Ensifer meliloti)).